Reading from the N-terminus, the 390-residue chain is Phosphoglycerate kinase (390 aa).

Residues 21-23, Arg-36, 59-62, Arg-114, and Arg-147 each bind substrate; these read DLN and HLGR. ATP contacts are provided by residues Lys-198, Glu-314, and 340–343; that span reads GGDT.

The protein belongs to the phosphoglycerate kinase family. As to quaternary structure, monomer.

The protein resides in the cytoplasm. The enzyme catalyses (2R)-3-phosphoglycerate + ATP = (2R)-3-phospho-glyceroyl phosphate + ADP. It functions in the pathway carbohydrate degradation; glycolysis; pyruvate from D-glyceraldehyde 3-phosphate: step 2/5. In Buchnera aphidicola subsp. Acyrthosiphon pisum (strain APS) (Acyrthosiphon pisum symbiotic bacterium), this protein is Phosphoglycerate kinase (pgk).